The sequence spans 60 residues: Large ribosomal subunit protein bL32 (60 aa).

The tract at residues 1–47 (MAVQQNRKTRSKRGMRRSHDALTSSTLSTDPTTGEKHRRHHVTADGF) is disordered. The span at 7 to 16 (RKTRSKRGMR) shows a compositional bias: basic residues.

The protein belongs to the bacterial ribosomal protein bL32 family.

The protein is Large ribosomal subunit protein bL32 of Teredinibacter turnerae (strain ATCC 39867 / T7901).